Consider the following 163-residue polypeptide: Neurotrophin-3 (163 aa).

An N-terminal signal peptide occupies residues 1-3 (IQS). Positions 4–119 (TSMDQGILTE…VLNRTSRRKR (116 aa)) are excised as a propeptide. N-linked (GlcNAc...) asparagine glycosylation is present at N112. A disordered region spans residues 113-133 (RTSRRKREGKSHRGEYSVCDS). The span at 123-133 (SHRGEYSVCDS) shows a compositional bias: basic and acidic residues.

The protein belongs to the NGF-beta family.

The protein resides in the secreted. Seems to promote the survival of visceral and proprioceptive sensory neurons. In Charina bottae (Northern rubber boa), this protein is Neurotrophin-3 (NTF3).